Consider the following 746-residue polypeptide: Steroid receptor seven-up, isoform A (746 aa).

Positions 38–191 are disordered; it reads PPHSAWHEPP…HSQSSNSGSQ (154 aa). Over residues 56–68 the composition is skewed to low complexity; sequence AASAGPGTTTGSV. Positions 83 to 101 are enriched in polar residues; it reads QQSAVIKQDLSCPSLNQAG. The span at 122 to 141 shows a compositional bias: gly residues; the sequence is GSAGGHHSGSGSGSGSGVNP. Positions 158 to 170 are enriched in polar residues; that stretch reads MLTSIKGQPTGCG. Positions 171–191 are enriched in low complexity; sequence STTPSSQANSSHSQSSNSGSQ. Positions 197–272 form a DNA-binding region, nuclear receptor; it reads NIECVVCGDK…MGMRREAVQR (76 aa). 2 consecutive NR C4-type zinc fingers follow at residues 200–220 and 236–260; these read CVVCGDKSSGKHYGQFTCEGC and CRGSRNCPIDQHHRNQCQYCRLKKC. Residues 307 to 556 enclose the NR LBD domain; it reads YLSSYISLLL…PLVPSAGSAF (250 aa). Residues 579-645 are disordered; it reads QATPPSSGGG…APAPVPTSSV (67 aa). Residues 592–605 show a composition bias toward polar residues; sequence GHNNSSGLGASLPT. A compositionally biased stretch (low complexity) spans 606 to 645; that stretch reads QSQSGSSSRNLTASPLSTSLATAPAPASASAPAPVPTSSV.

The protein belongs to the nuclear hormone receptor family. NR2 subfamily. As to expression, expressed in several embryonic tissues; dorsal vessel, oenocyte and fat body. CNS expression is dynamic and confined to temporally restricted subsections of the NB lineage; expressed in many NB and GMCs, but only a small number of neurons.

The protein resides in the nucleus. Functionally, receptor that is required in photoreceptors R1, R3, R4 and R6 during eye development; generation of the ganglion mother cell-2 (GMC-2) fate in the nb7-3 lineage, coinciding with the transition in the expression of HB to KR in the neuroblasts (NBs). The polypeptide is Steroid receptor seven-up, isoform A (svp) (Drosophila melanogaster (Fruit fly)).